The primary structure comprises 399 residues: N-acetylglucosamine-6-phosphate deacetylase (399 aa).

Residues His65, His67, and Glu135 each coordinate a divalent metal cation. Residue 146–147 (AH) coordinates substrate. The a divalent metal cation site is built by His201 and His222. Residues 225–226 (NG), Arg233, and 254–257 (DGHH) each bind substrate. A divalent metal cation is bound at residue Asp279. Asp279 functions as the Proton donor/acceptor in the catalytic mechanism. Residue 312–314 (LAG) participates in substrate binding.

The protein belongs to the metallo-dependent hydrolases superfamily. NagA family. Homodimer. It depends on a divalent metal cation as a cofactor.

It carries out the reaction N-acetyl-D-glucosamine 6-phosphate + H2O = D-glucosamine 6-phosphate + acetate. Its pathway is amino-sugar metabolism; N-acetylneuraminate degradation; D-fructose 6-phosphate from N-acetylneuraminate: step 4/5. Its function is as follows. Involved in the first committed step in the biosynthesis of amino-sugar-nucleotides. Catalyzes the hydrolysis of the N-acetyl group of N-acetylglucosamine-6-phosphate (GlcNAc-6-P) to yield glucosamine 6-phosphate and acetate. In Vibrio furnissii, this protein is N-acetylglucosamine-6-phosphate deacetylase (manD).